Here is a 727-residue protein sequence, read N- to C-terminus: Protein EXECUTER 1, chloroplastic (727 aa).

Disordered regions lie at residues 1 to 51 (MAAA…SRLF), 65 to 102 (LAGA…AGSG), 340 to 381 (ISSS…LPSD), and 413 to 455 (DEDD…SGDE). Residues 1-83 (MAAAVSTAPR…PRRRVSSVVR (83 aa)) constitute a chloroplast transit peptide. Composition is skewed to low complexity over residues 19 to 33 (SSSC…ASMS) and 42 to 51 (PSSGSGSRLF). Acidic residues predominate over residues 413–441 (DEDDENDNPEDEIESSEDIGDGDNVEEAE).

Its subcellular location is the plastid. The protein resides in the chloroplast. Its function is as follows. Together with EX2, enables higher plants to perceive singlet oxygen as a stress signal in plastid that activates a genetically determined nuclear stress response program which triggers a programmed cell death (PCD). This transfer of singlet oxygen-induced stress-related signals from the plastid to the nucleus that triggers genetically controlled PCD pathway is unique to photosynthetic eukaryotes and operates under mild stress conditions, impeding photosystem II (PSII) without causing photooxidative damage of the plant. This is Protein EXECUTER 1, chloroplastic from Oryza sativa subsp. japonica (Rice).